The primary structure comprises 92 residues: Acylphosphatase (92 aa).

Residues 3 to 90 form the Acylphosphatase-like domain; it reads RVHVLVAGRV…GEFTEFAVLR (88 aa). Active-site residues include Arg-18 and Asn-36.

Belongs to the acylphosphatase family.

It carries out the reaction an acyl phosphate + H2O = a carboxylate + phosphate + H(+). This chain is Acylphosphatase (acyP), found in Methylococcus capsulatus (strain ATCC 33009 / NCIMB 11132 / Bath).